A 318-amino-acid polypeptide reads, in one-letter code: MSFSSDTKDELARIYPEEEESKIAELAALIRTIGSISMYGNGKISLTFTTENASVARLVFKLIKDLFGIIPETMVRRGRYLKKTLSYLIFVPDTKIAEEILGKVKILNYEKGHIKLNYGIDQKIVKNSKAKKAYLRGAFLGGGSISDPEKAYHMEFITHNLEHGKDLSKLINSFDLNSKVIARKNNYVVYLKEGEQIVDVLNIMGAHSALLNLENIRVYKEMRNNVNRIVNCETANLTKTINASLRQIESINYIKETVGLDYLPPNLKEVAELRINYPDLSLKELGQMLVPPVGKSGVNHRLRKIEEISKKLKERRVQ.

The H-T-H motif DNA-binding region spans 281–314; it reads SLKELGQMLVPPVGKSGVNHRLRKIEEISKKLKE.

It belongs to the WhiA family.

Its function is as follows. Involved in cell division and chromosome segregation. This chain is Probable cell division protein WhiA, found in Thermoanaerobacter pseudethanolicus (strain ATCC 33223 / 39E) (Clostridium thermohydrosulfuricum).